Consider the following 491-residue polypeptide: Cobyric acid synthase (491 aa).

The GATase cobBQ-type domain occupies Asp-250–Trp-441. Cys-331 functions as the Nucleophile in the catalytic mechanism. His-433 is a catalytic residue.

The protein belongs to the CobB/CobQ family. CobQ subfamily.

It functions in the pathway cofactor biosynthesis; adenosylcobalamin biosynthesis. Its function is as follows. Catalyzes amidations at positions B, D, E, and G on adenosylcobyrinic A,C-diamide. NH(2) groups are provided by glutamine, and one molecule of ATP is hydrogenolyzed for each amidation. In Trichormus variabilis (strain ATCC 29413 / PCC 7937) (Anabaena variabilis), this protein is Cobyric acid synthase.